Reading from the N-terminus, the 116-residue chain is NAD(P)H-quinone oxidoreductase subunit M (116 aa).

This sequence belongs to the complex I NdhM subunit family. In terms of assembly, NDH-1 can be composed of about 15 different subunits; different subcomplexes with different compositions have been identified which probably have different functions.

It is found in the cellular thylakoid membrane. It carries out the reaction a plastoquinone + NADH + (n+1) H(+)(in) = a plastoquinol + NAD(+) + n H(+)(out). It catalyses the reaction a plastoquinone + NADPH + (n+1) H(+)(in) = a plastoquinol + NADP(+) + n H(+)(out). Its function is as follows. NDH-1 shuttles electrons from an unknown electron donor, via FMN and iron-sulfur (Fe-S) centers, to quinones in the respiratory and/or the photosynthetic chain. The immediate electron acceptor for the enzyme in this species is believed to be plastoquinone. Couples the redox reaction to proton translocation, and thus conserves the redox energy in a proton gradient. Cyanobacterial NDH-1 also plays a role in inorganic carbon-concentration. This Synechococcus sp. (strain RCC307) protein is NAD(P)H-quinone oxidoreductase subunit M.